Reading from the N-terminus, the 469-residue chain is 3-isopropylmalate dehydratase large subunit (469 aa).

Residues C349, C410, and C413 each coordinate [4Fe-4S] cluster.

Belongs to the aconitase/IPM isomerase family. LeuC type 1 subfamily. In terms of assembly, heterodimer of LeuC and LeuD. Requires [4Fe-4S] cluster as cofactor.

It carries out the reaction (2R,3S)-3-isopropylmalate = (2S)-2-isopropylmalate. It participates in amino-acid biosynthesis; L-leucine biosynthesis; L-leucine from 3-methyl-2-oxobutanoate: step 2/4. Catalyzes the isomerization between 2-isopropylmalate and 3-isopropylmalate, via the formation of 2-isopropylmaleate. The sequence is that of 3-isopropylmalate dehydratase large subunit from Neisseria meningitidis serogroup C (strain 053442).